We begin with the raw amino-acid sequence, 640 residues long: PTS system mannitol-specific EIICBA component (640 aa).

Residues 12-343 (LGRFLSAMIM…LKISNRNHYV (332 aa)) form the PTS EIIC type-2 domain. The next 6 membrane-spanning stretches (helical) occupy residues 24–45 (ISVF…WCPN), 50–70 (KVLS…TGGY), 134–155 (SVGI…PMIE), 165–185 (VNLM…EPAK), 273–292 (LILG…GGLI), and 313–334 (VINL…CMLL). One can recognise a PTS EIIB type-2 domain in the interval 379 to 475 (RNIIFACDAG…YLVENNLDNN (97 aa)). C385 serves as the catalytic Phosphocysteine intermediate; for EIIB activity. C385 carries the phosphocysteine; by EIIA modification. The 143-residue stretch at 496–638 (FSLTKENIFL…DDVLYLFSRK (143 aa)) folds into the PTS EIIA type-2 domain. H556 (tele-phosphohistidine intermediate; for EIIA activity) is an active-site residue. At H556 the chain carries Phosphohistidine; by HPr.

Homodimer. Post-translationally, an intramolecular phosphotransfer takes places between His-556 and Cys-385.

The protein localises to the cell inner membrane. The enzyme catalyses D-mannitol(out) + N(pros)-phospho-L-histidyl-[protein] = D-mannitol 1-phosphate(in) + L-histidyl-[protein]. In terms of biological role, the phosphoenolpyruvate-dependent sugar phosphotransferase system (sugar PTS), a major carbohydrate active transport system, catalyzes the phosphorylation of incoming sugar substrates concomitantly with their translocation across the cell membrane. This system is involved in D-mannitol transport. This chain is PTS system mannitol-specific EIICBA component (mtlA), found in Buchnera aphidicola subsp. Baizongia pistaciae (strain Bp).